The following is a 394-amino-acid chain: Glutamyl-tRNA reductase (394 aa).

Substrate-binding positions include 45–48, Ser99, 104–106, and Gln110; these read TCNR and EEQ. Residue Cys46 is the Nucleophile of the active site. NADP(+) is bound at residue 175–180; it reads GLGNIG.

This sequence belongs to the glutamyl-tRNA reductase family. As to quaternary structure, homodimer.

It carries out the reaction (S)-4-amino-5-oxopentanoate + tRNA(Glu) + NADP(+) = L-glutamyl-tRNA(Glu) + NADPH + H(+). The protein operates within porphyrin-containing compound metabolism; protoporphyrin-IX biosynthesis; 5-aminolevulinate from L-glutamyl-tRNA(Glu): step 1/2. Functionally, catalyzes the NADPH-dependent reduction of glutamyl-tRNA(Glu) to glutamate 1-semialdehyde (GSA). The protein is Glutamyl-tRNA reductase of Caldicellulosiruptor saccharolyticus (strain ATCC 43494 / DSM 8903 / Tp8T 6331).